Reading from the N-terminus, the 518-residue chain is Mitochondrial distribution and morphology protein 34 (518 aa).

Residues Met-1 to Leu-198 enclose the SMP-LTD domain. 2 disordered regions span residues Ser-335–Ser-369 and Ile-491–Val-518. Residues Arg-336 to Ser-350 show a composition bias toward basic residues. The span at Pro-492–Thr-506 shows a compositional bias: basic and acidic residues.

It belongs to the MDM34 family. Component of the ER-mitochondria encounter structure (ERMES) or MDM complex, composed of MMM1, MDM10, MDM12 and MDM34.

It is found in the mitochondrion outer membrane. In terms of biological role, component of the ERMES/MDM complex, which serves as a molecular tether to connect the endoplasmic reticulum (ER) and mitochondria. Components of this complex are involved in the control of mitochondrial shape and protein biogenesis, and function in nonvesicular lipid trafficking between the ER and mitochondria. MDM34 is required for the interaction of the ER-resident membrane protein MMM1 and the outer mitochondrial membrane-resident beta-barrel protein MDM10. The chain is Mitochondrial distribution and morphology protein 34 from Meyerozyma guilliermondii (strain ATCC 6260 / CBS 566 / DSM 6381 / JCM 1539 / NBRC 10279 / NRRL Y-324) (Yeast).